The primary structure comprises 660 residues: Bifunctional polymyxin resistance protein ArnA (660 aa).

Positions 1–304 (MKAVIFAYHD…TLGLVAGARL (304 aa)) are formyltransferase ArnAFT. Histidine 104 serves as the catalytic Proton donor; for formyltransferase activity. Residues arginine 114 and 136-140 (VKRAD) each bind (6R)-10-formyltetrahydrofolate. The segment at 314–660 (RRIRVLILGV…RSVDVAERAS (347 aa)) is dehydrogenase ArnADH. NAD(+)-binding positions include aspartate 347 and 368–369 (DI). Residues alanine 393, tyrosine 398, and 432–433 (TS) each bind UDP-alpha-D-glucuronate. Glutamate 434 serves as the catalytic Proton acceptor; for decarboxylase activity. UDP-alpha-D-glucuronate is bound by residues arginine 460, asparagine 492, 526 to 535 (KLIDGGQQKR), and tyrosine 613. Arginine 619 (proton donor; for decarboxylase activity) is an active-site residue.

In the N-terminal section; belongs to the Fmt family. UDP-L-Ara4N formyltransferase subfamily. It in the C-terminal section; belongs to the NAD(P)-dependent epimerase/dehydratase family. UDP-glucuronic acid decarboxylase subfamily. Homohexamer, formed by a dimer of trimers.

The catalysed reaction is UDP-alpha-D-glucuronate + NAD(+) = UDP-beta-L-threo-pentopyranos-4-ulose + CO2 + NADH. It catalyses the reaction UDP-4-amino-4-deoxy-beta-L-arabinose + (6R)-10-formyltetrahydrofolate = UDP-4-deoxy-4-formamido-beta-L-arabinose + (6S)-5,6,7,8-tetrahydrofolate + H(+). It functions in the pathway nucleotide-sugar biosynthesis; UDP-4-deoxy-4-formamido-beta-L-arabinose biosynthesis; UDP-4-deoxy-4-formamido-beta-L-arabinose from UDP-alpha-D-glucuronate: step 1/3. The protein operates within nucleotide-sugar biosynthesis; UDP-4-deoxy-4-formamido-beta-L-arabinose biosynthesis; UDP-4-deoxy-4-formamido-beta-L-arabinose from UDP-alpha-D-glucuronate: step 3/3. Its pathway is bacterial outer membrane biogenesis; lipopolysaccharide biosynthesis. Functionally, bifunctional enzyme that catalyzes the oxidative decarboxylation of UDP-glucuronic acid (UDP-GlcUA) to UDP-4-keto-arabinose (UDP-Ara4O) and the addition of a formyl group to UDP-4-amino-4-deoxy-L-arabinose (UDP-L-Ara4N) to form UDP-L-4-formamido-arabinose (UDP-L-Ara4FN). The modified arabinose is attached to lipid A and is required for resistance to polymyxin and cationic antimicrobial peptides. This Salmonella paratyphi C (strain RKS4594) protein is Bifunctional polymyxin resistance protein ArnA.